A 434-amino-acid chain; its full sequence is Adenylosuccinate synthetase (434 aa).

Residues 22–28 (GDEGKGK) and 50–52 (GHT) contribute to the GTP site. The active-site Proton acceptor is the Asp-23. Residues Asp-23 and Gly-50 each contribute to the Mg(2+) site. IMP-binding positions include 23 to 26 (DEGK), 48 to 51 (NAGH), Thr-139, Arg-153, Gln-234, Thr-249, and Arg-313. His-51 functions as the Proton donor in the catalytic mechanism. Position 309-315 (309-315 (ATTGRKR)) interacts with substrate. Residues Arg-315, 341-343 (KLD), and 423-425 (SVG) each bind GTP.

This sequence belongs to the adenylosuccinate synthetase family. As to quaternary structure, homodimer. Requires Mg(2+) as cofactor.

Its subcellular location is the cytoplasm. The enzyme catalyses IMP + L-aspartate + GTP = N(6)-(1,2-dicarboxyethyl)-AMP + GDP + phosphate + 2 H(+). The protein operates within purine metabolism; AMP biosynthesis via de novo pathway; AMP from IMP: step 1/2. In terms of biological role, plays an important role in the de novo pathway of purine nucleotide biosynthesis. Catalyzes the first committed step in the biosynthesis of AMP from IMP. The chain is Adenylosuccinate synthetase from Pelodictyon phaeoclathratiforme (strain DSM 5477 / BU-1).